Reading from the N-terminus, the 274-residue chain is Peroxiredoxin-4 (274 aa).

Residues 1-40 (MEAPPPPPPLPATTLAPGRSRKLLLLPLLLFLLRAEAVRG) form the signal peptide. Residues 82 to 240 (AKISKPAPYW…TLRLVQAFQY (159 aa)) enclose the Thioredoxin domain. Catalysis depends on Cys127, which acts as the Cysteine sulfenic acid (-SOH) intermediate.

The protein belongs to the peroxiredoxin family. AhpC/Prx1 subfamily. In terms of assembly, homodimer; disulfide-linked, upon oxidation. 5 homodimers assemble to form a ring-like decamer. Post-translationally, the enzyme can be inactivated by further oxidation of the cysteine sulfenic acid (C(P)-SOH) to sulphinic acid (C(P)-SO2H) and sulphonic acid (C(P)-SO3H) instead of its condensation to a disulfide bond.

The protein resides in the cytoplasm. It is found in the endoplasmic reticulum. The enzyme catalyses a hydroperoxide + [thioredoxin]-dithiol = an alcohol + [thioredoxin]-disulfide + H2O. In terms of biological role, thiol-specific peroxidase that catalyzes the reduction of hydrogen peroxide and organic hydroperoxides to water and alcohols, respectively. Plays a role in cell protection against oxidative stress by detoxifying peroxides and as sensor of hydrogen peroxide-mediated signaling events. Regulates the activation of NF-kappa-B in the cytosol by a modulation of I-kappa-B-alpha phosphorylation. In Bos taurus (Bovine), this protein is Peroxiredoxin-4 (PRDX4).